The primary structure comprises 200 residues: Oligoribonuclease (200 aa).

An Exonuclease domain is found at 5-169 (MVWIDCEMTG…ADIRESIAEL (165 aa)). Tyr126 is an active-site residue.

The protein belongs to the oligoribonuclease family.

The protein resides in the cytoplasm. In terms of biological role, 3'-to-5' exoribonuclease specific for small oligoribonucleotides. The polypeptide is Oligoribonuclease (Streptomyces coelicolor (strain ATCC BAA-471 / A3(2) / M145)).